The following is a 147-amino-acid chain: Nucleoside diphosphate kinase (147 aa).

ATP is bound by residues Lys-9, Phe-57, Arg-85, Thr-91, Arg-102, and Asn-112. Catalysis depends on His-115, which acts as the Pros-phosphohistidine intermediate.

It belongs to the NDK family. In terms of assembly, homotetramer. The cofactor is Mg(2+).

Its subcellular location is the cytoplasm. The enzyme catalyses a 2'-deoxyribonucleoside 5'-diphosphate + ATP = a 2'-deoxyribonucleoside 5'-triphosphate + ADP. The catalysed reaction is a ribonucleoside 5'-diphosphate + ATP = a ribonucleoside 5'-triphosphate + ADP. Functionally, major role in the synthesis of nucleoside triphosphates other than ATP. The ATP gamma phosphate is transferred to the NDP beta phosphate via a ping-pong mechanism, using a phosphorylated active-site intermediate. The protein is Nucleoside diphosphate kinase of Listeria monocytogenes serotype 4b (strain CLIP80459).